Reading from the N-terminus, the 528-residue chain is Tyrosine--tRNA ligase, cytoplasmic (528 aa).

N-acetylmethionine is present on Met1. An N-acetylglycine; in Tyrosine--tRNA ligase, cytoplasmic, N-terminally processed modification is found at Gly2. Tyr39 contacts L-tyrosine. Residue Tyr39 coordinates trans-resveratrol. The short motif at 44-52 is the 'HIGH' region element; the sequence is TTGKPHVAY. Tyr166, Gln170, Asp173, and Gln188 together coordinate L-tyrosine. Gln170 and Asp173 together coordinate trans-resveratrol. The residue at position 197 (Lys197) is an N6-acetyllysine. The residue at position 205 (Ser205) is a Phosphoserine. Residue Lys206 is modified to N6-acetyllysine. The 'KMSKS' region signature appears at 222-226; sequence KMSSS. Residues 242-247 carry the Nuclear localization signal motif; sequence KKKLKK. Residues 339-363 form a disordered region; it reads AAYPDPSKQKPMAKGPAKNSEPEEV. The tRNA-binding domain occupies 364–468; sequence IPSRLDIRVG…AGSAPGEHVF (105 aa). The residue at position 386 (Ser386) is a Phosphoserine. N6-acetyllysine occurs at positions 474, 482, and 490.

Belongs to the class-I aminoacyl-tRNA synthetase family. Homodimer. Interacts (when binding to resveratrol) with PARP1; interaction stimulates the poly-ADP-ribosyltransferase activity of PARP1.

The protein resides in the cytoplasm. Its subcellular location is the nucleus. It catalyses the reaction tRNA(Tyr) + L-tyrosine + ATP = L-tyrosyl-tRNA(Tyr) + AMP + diphosphate + H(+). Its activity is regulated as follows. Resveratrol strongly inhibits the tyrosine--tRNA ligase activity. In terms of biological role, tyrosine--tRNA ligase that catalyzes the attachment of tyrosine to tRNA(Tyr) in a two-step reaction: tyrosine is first activated by ATP to form Tyr-AMP and then transferred to the acceptor end of tRNA(Tyr). Also acts as a positive regulator of poly-ADP-ribosylation in the nucleus, independently of its tyrosine--tRNA ligase activity. Activity is switched upon resveratrol-binding: resveratrol strongly inhibits the tyrosine--tRNA ligase activity and promotes relocalization to the nucleus, where YARS1 specifically stimulates the poly-ADP-ribosyltransferase activity of PARP1. This chain is Tyrosine--tRNA ligase, cytoplasmic, found in Homo sapiens (Human).